Consider the following 328-residue polypeptide: P2Y purinoceptor 6 (328 aa).

Over 1–27 (MERDNGTIQAPGLPPTTCVYREDFKRL) the chain is Extracellular. The N-linked (GlcNAc...) asparagine glycan is linked to N5. Residues 28-48 (LLPPVYSVVLVVGLPLNVCVI) traverse the membrane as a helical segment. Residues 49-62 (AQICASRRTLTRSA) lie on the Cytoplasmic side of the membrane. Residues 63–83 (VYTLNLALADLLYACSLPLLI) form a helical membrane-spanning segment. The Extracellular segment spans residues 84–101 (YNYARGDHWPFGDLACRL). C99 and C177 are joined by a disulfide. The chain crosses the membrane as a helical span at residues 102 to 122 (VRFLFYANLHGSILFLTCISF). At 123 to 144 (QRYLGICHPLAPWHKRGGRRAA) the chain is on the cytoplasmic side. A helical transmembrane segment spans residues 145–165 (WVVCGVVWLVVTAQCLPTAVF). Residues 166–194 (AATGIQRNRTVCYDLSPPILSTRYLPYGM) are Extracellular-facing. N173 carries an N-linked (GlcNAc...) asparagine glycan. Residues 195 to 215 (ALTVIGFLLPFTALLACYCRM) traverse the membrane as a helical segment. Topologically, residues 216–236 (ARRLCRQDGPAGPVAQERRSK) are cytoplasmic. Residues 237–257 (AARMAVVVAAVFVISFLPFHI) form a helical membrane-spanning segment. The Extracellular segment spans residues 258 to 280 (TKTAYLAVRSTPGVSCPVLETFA). The chain crosses the membrane as a helical span at residues 281–303 (AAYKGTRPFASANSVLDPILFYF). Over 304-328 (TQQKFRRQPHDLLQKLTAKWQRQRV) the chain is Cytoplasmic.

The protein belongs to the G-protein coupled receptor 1 family. In terms of tissue distribution, abundantly expressed in various tissues including lung, stomach, intestine, spleen, mesentery, heart, and, most prominently, aorta.

The protein localises to the cell membrane. Receptor for extracellular UTP &gt; ADP = 2-methylthio-ATP &gt; ADP-beta-S &gt; ATP = ATP-gamma-S. The activity of this receptor is mediated by G proteins which activate a phosphatidylinositol-calcium second messenger system. Functionally coupled to phospholipase C. The chain is P2Y purinoceptor 6 (P2ry6) from Rattus norvegicus (Rat).